A 396-amino-acid chain; its full sequence is Purine ribonucleoside efflux pump NepI (396 aa).

Residues 1–21 (MSEFIAENRGANAITRPNWSA) lie on the Cytoplasmic side of the membrane. Residues 22 to 42 (VFSVAFCVACLIIVEFLPVSL) form a helical membrane-spanning segment. The Periplasmic segment spans residues 43–54 (LTPMAQDLGISE). A helical membrane pass occupies residues 55-75 (GVAGQSVTVTAFVAMFASLFI). At 76–85 (TQTIQATDRR) the chain is on the cytoplasmic side. A helical membrane pass occupies residues 86–106 (YVVILFAVLLTLSCLLVSFAN). Position 107 (S107) is a topological domain, periplasmic. Residues 108–128 (FSLLLIGRACLGVALGGFWAI) form a helical membrane-spanning segment. Topologically, residues 129 to 147 (SASLTMRLVPPRTVPKALS) are cytoplasmic. Residues 148–168 (VIFGAVSIALVIAAPLGSFLG) form a helical membrane-spanning segment. Over 169–175 (ELIGWRN) the chain is Periplasmic. A helical membrane pass occupies residues 176–196 (VFNAAAAMGVLCIFWIIKSLP). Topologically, residues 197–215 (SLPGEPSHQKQNTFRLLQR) are cytoplasmic. A helical transmembrane segment spans residues 216 to 236 (PGVMAGMIAIFMSFAGQFAFF). Over 237–255 (TYIRPVYMNLAGFGVDGLT) the chain is Periplasmic. The helical transmembrane segment at 256–276 (LVLLSFGIASFVGTSLSSFIL) threads the bilayer. Residues 277–281 (KRSVK) are Cytoplasmic-facing. Residues 282–302 (LALAGAPFVLALSALVLTLWG) traverse the membrane as a helical segment. At 303 to 305 (SDK) the chain is on the periplasmic side. Residues 306–326 (IVATGVAIIWGLTFALIPVGW) traverse the membrane as a helical segment. At 327–343 (STWITRSLADQAEKAGS) the chain is on the cytoplasmic side. The chain crosses the membrane as a helical span at residues 344 to 364 (IQVAVIQLANTCGAAIGGYAL). The Periplasmic portion of the chain corresponds to 365 to 366 (DN). The helical transmembrane segment at 367-387 (IGLTSPLMLSGTLMLLTALLV) threads the bilayer. The Cytoplasmic portion of the chain corresponds to 388–396 (TAKVKMKKS).

Belongs to the major facilitator superfamily. DHA1 family. NepI (TC 2.A.1.2.26) subfamily.

The protein resides in the cell inner membrane. It catalyses the reaction inosine(in) + H(+)(out) = inosine(out) + H(+)(in). It carries out the reaction guanosine(in) + H(+)(out) = guanosine(out) + H(+)(in). Involved in the efflux of purine ribonucleosides, such as inosine and guanosine. The polypeptide is Purine ribonucleoside efflux pump NepI (Escherichia coli O6:K15:H31 (strain 536 / UPEC)).